Reading from the N-terminus, the 130-residue chain is Serum amyloid A-4 protein (130 aa).

Positions 1–18 (MRLFTGIVFCSLVMGVTS) are cleaved as a signal peptide. Residue Asn94 is glycosylated (N-linked (GlcNAc...) asparagine; partial). The interval 101 to 130 (DSKSNEKAEEWGRSGKDPDRFRPDGLPKKY) is disordered.

This sequence belongs to the SAA family. Apolipoprotein of the HDL complex. In terms of tissue distribution, expressed by the liver; secreted in plasma.

It localises to the secreted. Major acute phase reactant. This chain is Serum amyloid A-4 protein, found in Homo sapiens (Human).